Reading from the N-terminus, the 3681-residue chain is E3 ubiquitin-protein ligase UPL1 (3681 aa).

The span at 882-891 (DEKKSVDRGS) shows a compositional bias: basic and acidic residues. Positions 882–912 (DEKKSVDRGSDNSVSASSSTAERESDEDSSN) are disordered. The segment covering 892–901 (DNSVSASSST) has biased composition (low complexity). Residues 1269-1310 (QLDESIVGMIVEMGFSRSRAEIALRRVGTNSVEMAMDWLFTN) form the UBA domain. The 20-residue stretch at 1316 to 1335 (QEDDELAQALALSLGNSSET) folds into the UIM domain. 10 disordered regions span residues 1332–1358 (SSET…KEPP), 1768–1802 (MEVD…KAEI), 2015–2094 (EQLK…MRIE), 2125–2151 (ENRA…EDAD), 2253–2287 (RQTG…TASV), 2401–2435 (NTTE…QSEE), 2483–2505 (PLPL…DGAP), 2537–2606 (IAPP…APEV), 2975–3003 (SPSS…DAES), and 3228–3254 (TAGE…KTDG). Basic and acidic residues-rich tracts occupy residues 1336–1345 (PKLEDTEKPV), 1782–1802 (KVGE…KAEI), and 2017–2037 (LKSE…HDSH). The segment covering 2038-2087 (GNSTETEADELNQNNSSLQQVTDAAGNGQEQAQVSSQSAGERGSSQTQAM) has biased composition (polar residues). Residues 2130–2151 (DDVDDDMGDEGEDDEGDDEDAD) are compositionally biased toward acidic residues. The span at 2253 to 2265 (RQTGRSSLDRSGS) shows a compositional bias: basic and acidic residues. A compositionally biased stretch (polar residues) spans 2277–2287 (RPSQTGNTASV). Position 2598 is a phosphoserine (S2598). Positions 2982–3002 (EKLENKPVGEEASSETRKDAE) are enriched in basic and acidic residues. Polar residues predominate over residues 3237 to 3247 (AHGSSSKTSVD). Residues 3340–3681 (SPQDLKGRLN…HEASEGFGFA (342 aa)) form the HECT domain. The active-site Glycyl thioester intermediate is the C3648.

This sequence belongs to the UPL family. TOM1/PTR1 subfamily. Widely expressed. Expressed in root, stem, cauline and rosette leaf, seedling and flower (at protein level).

The enzyme catalyses S-ubiquitinyl-[E2 ubiquitin-conjugating enzyme]-L-cysteine + [acceptor protein]-L-lysine = [E2 ubiquitin-conjugating enzyme]-L-cysteine + N(6)-ubiquitinyl-[acceptor protein]-L-lysine.. It participates in protein modification; protein ubiquitination. Its function is as follows. Probable E3 ubiquitin-protein ligase which mediates ubiquitination and subsequent proteasomal degradation of target proteins. The protein is E3 ubiquitin-protein ligase UPL1 (UPL1) of Arabidopsis thaliana (Mouse-ear cress).